Here is a 26-residue protein sequence, read N- to C-terminus: Dermaseptin-J2 (26 aa).

Residue valine 26 is modified to Valine amide.

In terms of tissue distribution, expressed by the skin glands.

The protein localises to the secreted. Functionally, has antimicrobial activity. This Phasmahyla jandaia (Jandaia leaf frog) protein is Dermaseptin-J2.